Here is a 617-residue protein sequence, read N- to C-terminus: Electron transfer flavoprotein-ubiquinone oxidoreductase, mitochondrial (617 aa).

Residues 1-33 (MLVPLAKLSCPAYQCFHALKIKKNYLPLCATRW) constitute a mitochondrion transit peptide. An FAD-binding site is contributed by 71–85 (VVIVGAGPAGLSAAV). N6-acetyllysine is present on Lys96. The stretch at 109–130 (IGAHTLSGACLDPGAFKELFPD) is an intramembrane region. Lys132 and Lys223 each carry N6-acetyllysine. Residues Gly305 and Gly306 each contribute to the a ubiquinone site. N6-acetyllysine is present on Lys357. Residues 428–447 (MGLHVTEYEDNLKNSWVWKE) lie within the membrane without spanning it. A Phosphoserine modification is found at Ser551. [4Fe-4S] cluster contacts are provided by Cys561, Cys586, Cys589, and Cys592. The 4Fe-4S ferredoxin-type domain occupies 577 to 606 (FRLQINAQNCVHCKTCDIKDPSQNINWVVP).

Belongs to the ETF-QO/FixC family. Monomer. [4Fe-4S] cluster is required as a cofactor. FAD serves as cofactor.

It localises to the mitochondrion inner membrane. It carries out the reaction a ubiquinone + reduced [electron-transfer flavoprotein] = a ubiquinol + oxidized [electron-transfer flavoprotein] + H(+). In terms of biological role, accepts electrons from ETF and reduces ubiquinone. This is Electron transfer flavoprotein-ubiquinone oxidoreductase, mitochondrial (ETFDH) from Pongo abelii (Sumatran orangutan).